The chain runs to 55 residues: MAKGIREKIRLVSSAGTGHFYTTDKNKRNMPGKFEIKKYDPVVRQHVVYKEAKIK.

This sequence belongs to the bacterial ribosomal protein bL33 family.

In Vibrio cholerae serotype O1 (strain ATCC 39541 / Classical Ogawa 395 / O395), this protein is Large ribosomal subunit protein bL33.